The following is a 1220-amino-acid chain: MSRSSAGFADFFPTAPSVIQQKRYQATRERQRSRPHLSREHADEEQIVTGSRTSGETVNGNSPQNLGQELRSDLNKSRKEVAEDGSASHGEANTPANNTSGPGTGSSNDTRLDTLTPLTNTESSPQNNPSPSQAKAPNGDEPDGFRQARANVSNSTMTPLHTPPTPTTHSLSQRVAIVKGSKLVHDPDRAPSKDKRKRPCYVDIVSDEQEGRLSDPRLSIQNYTRGAGCRQKTKYRPAPYVLRHWPYDPASTVGPGPPVQIVVTGFDPLTPLAPISTLFSSFGEIAEINNRTDPDTGRFLGICSVKYKDSASFHGSGPVSASLAAKNAFHECKKGQRIGNNRIKVEYDRDGQTSEKLASRAIAAQRIDSKIDMPVVGEPKSEAQVNKNEPPPTAPKGPSGRSFMRPSAVIPEGPRASFQKPAIPSLIEETPILNQIKRDPYIFIAHCYVPVLSSTLPHLKKRLKAFNWKDIRCDRTGYYIIFENSRRGEEETERCYKFCHMKLLFTYIMNMESQPYGNPHYERSPSPERMKQEQRQKAETERLKKEAELDIEEEKKQRALDLDPCTEVLAIVIKDLRDKLLEDVKSRIAAPALYDYLDPERHASRRKQLGIPDPEGIKRPMFRLDFDSRDSTPDPHAKFLNKRHPSGVSGLNILSALPRIRKAHRLDRTDVAFLDERRKQPLRRRNVRPLYHRLQQLHDAEDSDEEQHTPLSRDTDDQDSRPPSRIGSETESEDADEDAAEALDNSTERLDNEDRHSEIGDLEAAVQDYSPSRKRKRTSESPSHRKKQKESDDFSAVGEGTRTDDIPQVLDGVHKGTVSQGLSDSADESSRLDHNKVLLEELVEDIKTTHSEEPGIKTHHVQVRQSAENMVEGAEYGEAARHEVEWRVSNDEPRPIVDDDDSVVMDLDGWQDVVKDEEDLQFLRNILEKQPMSVIGNLSAWAWRQKEIKALNRPGDVGPTRQAASIEGYYVPNITGAARTEGRKRILESEKSKYLPHRIKVQKAREEREAKAKSDPQNAAAEAARIAAAKTISKSTSRSTRVNNRRLIADINAQKQALPSQGGDSDVLRFNQLKKRKKPVRFARSAIHNWGLYAEVNISANEMIIEYVGEKVRQQVADMRERRYLKSGIGSSYLFRIDENTVIDATKRGGIARFINHSCTPNCTAKIIKVDGSKRIVIYALRDIERDEELTYDYKFEREWDSDDRIPCLCGSAGCKGFLN.

Disordered regions lie at residues 1–147, 179–198, 374–416, 516–542, and 697–811; these read MSRS…GFRQ, KGSK…KRKR, PVVG…GPRA, YGNP…ETER, and LHDA…QVLD. Over residues 26-44 the composition is skewed to basic and acidic residues; that stretch reads ATRERQRSRPHLSREHADE. Over residues 48 to 67 the composition is skewed to polar residues; sequence VTGSRTSGETVNGNSPQNLG. A compositionally biased stretch (basic and acidic residues) spans 70–82; sequence LRSDLNKSRKEVA. Residues 94–109 are compositionally biased toward polar residues; that stretch reads TPANNTSGPGTGSSND. Positions 123-133 are enriched in low complexity; that stretch reads SSPQNNPSPSQ. The span at 183–193 shows a compositional bias: basic and acidic residues; that stretch reads LVHDPDRAPSK. Composition is skewed to basic and acidic residues over residues 520–542 and 697–722; these read HYER…ETER and LHDA…DSRP. The span at 730–741 shows a compositional bias: acidic residues; sequence TESEDADEDAAE. Positions 746–759 are enriched in basic and acidic residues; that stretch reads STERLDNEDRHSEI. The short motif at 1041–1046 is the RxxxRR motif element; that stretch reads RVNNRR. An SET domain is found at 1078 to 1195; that stretch reads KPVRFARSAI…RDEELTYDYK (118 aa). Y1194 is a binding site for S-adenosyl-L-methionine. The region spanning 1204–1220 is the Post-SET domain; it reads DRIPCLCGSAGCKGFLN.

It belongs to the class V-like SAM-binding methyltransferase superfamily. In terms of assembly, component of the Set1C/COMPASS complex.

It is found in the nucleus. Its subcellular location is the chromosome. The catalysed reaction is L-lysyl(4)-[histone H3] + 3 S-adenosyl-L-methionine = N(6),N(6),N(6)-trimethyl-L-lysyl(4)-[histone H3] + 3 S-adenosyl-L-homocysteine + 3 H(+). It carries out the reaction N(6)-methyl-L-lysyl(4)-[histone H3] + S-adenosyl-L-methionine = N(6),N(6)-dimethyl-L-lysyl(4)-[histone H3] + S-adenosyl-L-homocysteine + H(+). The enzyme catalyses N(6),N(6)-dimethyl-L-lysyl(4)-[histone H3] + S-adenosyl-L-methionine = N(6),N(6),N(6)-trimethyl-L-lysyl(4)-[histone H3] + S-adenosyl-L-homocysteine + H(+). Functionally, catalytic component of the COMPASS (Set1C) complex that specifically mono-, di- and trimethylates histone H3 to form H3K4me1/2/3. Binds RNAs which might negatively affect its histone methyltransferase activity. COMPASS recognizes ubiquitinated H2B on one face of the nucleosome which stimulates the methylation of H3 on the opposing face. The protein is Histone-lysine N-methyltransferase, H3 lysine-4 specific (set1) of Emericella nidulans (strain FGSC A4 / ATCC 38163 / CBS 112.46 / NRRL 194 / M139) (Aspergillus nidulans).